A 305-amino-acid chain; its full sequence is UDP-3-O-acyl-N-acetylglucosamine deacetylase (305 aa).

His-79, His-238, and Asp-242 together coordinate Zn(2+). His-265 serves as the catalytic Proton donor.

It belongs to the LpxC family. Zn(2+) serves as cofactor.

The catalysed reaction is a UDP-3-O-[(3R)-3-hydroxyacyl]-N-acetyl-alpha-D-glucosamine + H2O = a UDP-3-O-[(3R)-3-hydroxyacyl]-alpha-D-glucosamine + acetate. It functions in the pathway glycolipid biosynthesis; lipid IV(A) biosynthesis; lipid IV(A) from (3R)-3-hydroxytetradecanoyl-[acyl-carrier-protein] and UDP-N-acetyl-alpha-D-glucosamine: step 2/6. In terms of biological role, catalyzes the hydrolysis of UDP-3-O-myristoyl-N-acetylglucosamine to form UDP-3-O-myristoylglucosamine and acetate, the committed step in lipid A biosynthesis. The polypeptide is UDP-3-O-acyl-N-acetylglucosamine deacetylase (Escherichia coli O45:K1 (strain S88 / ExPEC)).